Reading from the N-terminus, the 232-residue chain is Protein fmp52-1, mitochondrial (232 aa).

The transit peptide at 1–36 (MASVALIGCTGMVGSHILTSLLAHPSVARVDTISRR) directs the protein to the mitochondrion.

This sequence belongs to the FMP52 family.

Its subcellular location is the mitochondrion outer membrane. This chain is Protein fmp52-1, mitochondrial (fmp521), found in Aspergillus terreus (strain NIH 2624 / FGSC A1156).